The chain runs to 317 residues: Signal recognition particle receptor FtsY (317 aa).

GTP contacts are provided by residues 117–124, 199–203, and 263–266; these read GVNGVGKT, DTAGR, and TKLD.

It belongs to the GTP-binding SRP family. FtsY subfamily. In terms of assembly, part of the signal recognition particle protein translocation system, which is composed of SRP and FtsY.

Its subcellular location is the cell membrane. The protein resides in the cytoplasm. It carries out the reaction GTP + H2O = GDP + phosphate + H(+). Functionally, involved in targeting and insertion of nascent membrane proteins into the cytoplasmic membrane. Acts as a receptor for the complex formed by the signal recognition particle (SRP) and the ribosome-nascent chain (RNC). This chain is Signal recognition particle receptor FtsY, found in Deinococcus radiodurans (strain ATCC 13939 / DSM 20539 / JCM 16871 / CCUG 27074 / LMG 4051 / NBRC 15346 / NCIMB 9279 / VKM B-1422 / R1).